The chain runs to 580 residues: E3 ubiquitin-protein ligase TRIM45 (580 aa).

The segment at 29 to 98 adopts an RING-type zinc-finger fold; sequence CPTCLRLFKV…QIGILCPVCD (70 aa). 2 consecutive B box-type zinc fingers follow at residues 130-176 and 186-227; these read GQGL…MVDL and GKPI…YDFT. The Zn(2+) site is built by Cys135, Cys138, Cys158, His162, Cys191, His194, Cys214, and His219. The stretch at 249-329 forms a coiled coil; sequence VEALEDALAQ…LLADMRTGVE (81 aa). Residues 394 to 497 form a Filamin repeat; that stretch reads TQEVDPAQCV…VQGSPFNVTV (104 aa).

It belongs to the TRIM/RBCC family.

It localises to the cytoplasm. It is found in the nucleus. It catalyses the reaction S-ubiquitinyl-[E2 ubiquitin-conjugating enzyme]-L-cysteine + [acceptor protein]-L-lysine = [E2 ubiquitin-conjugating enzyme]-L-cysteine + N(6)-ubiquitinyl-[acceptor protein]-L-lysine.. Its function is as follows. E3 ubiquitin-protein ligase that plays a role in the regulation of inflammatory response. Mechanistically, mediates the 'Lys-48'-linked polyubiquitination of TAB2, a regulatory protein of the kinase TAK1, leading to its degradation via the proteasomal pathway and inhibition of the TLR-mediated inflammatory immune response. May act as a transcriptional repressor in mitogen-activated protein kinase signaling pathway. This is E3 ubiquitin-protein ligase TRIM45 (Trim45) from Mus musculus (Mouse).